The following is a 214-amino-acid chain: 3-isopropylmalate dehydratase small subunit (214 aa).

This sequence belongs to the LeuD family. LeuD type 1 subfamily. As to quaternary structure, heterodimer of LeuC and LeuD.

It catalyses the reaction (2R,3S)-3-isopropylmalate = (2S)-2-isopropylmalate. The protein operates within amino-acid biosynthesis; L-leucine biosynthesis; L-leucine from 3-methyl-2-oxobutanoate: step 2/4. In terms of biological role, catalyzes the isomerization between 2-isopropylmalate and 3-isopropylmalate, via the formation of 2-isopropylmaleate. The polypeptide is 3-isopropylmalate dehydratase small subunit (Nitrosococcus oceani (strain ATCC 19707 / BCRC 17464 / JCM 30415 / NCIMB 11848 / C-107)).